Here is a 216-residue protein sequence, read N- to C-terminus: Probable GTP-binding protein EngB (216 aa).

The EngB-type G domain maps to 26 to 210 (PMATIIFAGR…KNRIFEVIRE (185 aa)). GTP-binding positions include 34–41 (GRSNVGKS), 59–63 (GVTRK), 76–79 (DMPG), 156–159 (NKLD), and 189–191 (ISA). 2 residues coordinate Mg(2+): serine 41 and threonine 61.

This sequence belongs to the TRAFAC class TrmE-Era-EngA-EngB-Septin-like GTPase superfamily. EngB GTPase family. Mg(2+) serves as cofactor.

Functionally, necessary for normal cell division and for the maintenance of normal septation. The protein is Probable GTP-binding protein EngB of Pyrococcus horikoshii (strain ATCC 700860 / DSM 12428 / JCM 9974 / NBRC 100139 / OT-3).